We begin with the raw amino-acid sequence, 139 residues long: D-ribose pyranase (139 aa).

Histidine 20 serves as the catalytic Proton donor. Residues aspartate 28, histidine 106, and 128–130 (YAN) contribute to the substrate site.

The protein belongs to the RbsD / FucU family. RbsD subfamily. In terms of assembly, homodecamer.

The protein resides in the cytoplasm. It catalyses the reaction beta-D-ribopyranose = beta-D-ribofuranose. It functions in the pathway carbohydrate metabolism; D-ribose degradation; D-ribose 5-phosphate from beta-D-ribopyranose: step 1/2. Catalyzes the interconversion of beta-pyran and beta-furan forms of D-ribose. This is D-ribose pyranase from Aliivibrio salmonicida (strain LFI1238) (Vibrio salmonicida (strain LFI1238)).